A 67-amino-acid chain; its full sequence is Large ribosomal subunit protein bL35 (67 aa).

It belongs to the bacterial ribosomal protein bL35 family.

In Bartonella tribocorum (strain CIP 105476 / IBS 506), this protein is Large ribosomal subunit protein bL35.